We begin with the raw amino-acid sequence, 412 residues long: uncharacterized protein (412 aa).

Over residues 1–17 (MPSQGNNKNSENITQNP) the composition is skewed to polar residues. Disordered stretches follow at residues 1–20 (MPSQGNNKNSENITQNPIEG), 223–243 (EQAVGQPIEQQSISDDEARQT), and 310–412 (QKQM…NPVA). The segment covering 340–355 (KLNSNTRGSSKRPSVN) has biased composition (polar residues). Positions 361–379 (GQRGRGGRGFYRGGRGRGG) are enriched in gly residues. Residues 390–402 (SNSNNSTSQPSPN) show a composition bias toward low complexity. A compositionally biased stretch (polar residues) spans 403–412 (AELSNFNPVA).

This is an uncharacterized protein from Schizosaccharomyces pombe (strain 972 / ATCC 24843) (Fission yeast).